The following is an 83-amino-acid chain: Defensin-1 (83 aa).

The first 33 residues, 1 to 33 (MAGKGVGSRLSTLFLLVLLVITIGMMQVQVAEG), serve as a signal peptide directing secretion. 4 cysteine pairs are disulfide-bonded: Cys-36/Cys-82, Cys-47/Cys-67, Cys-53/Cys-76, and Cys-57/Cys-78.

The protein belongs to the DEFL family.

Its subcellular location is the secreted. Plant defense peptide. Has antifungal activity against B.cinera, F.oxysporum, F.solani and H.annosum with IC(50) values of 0.4 ug/ml, 2.9 ug/ml, 0.9 ug/ml and 1.4 ug/ml, respectively. Has modest antifungal activity against C.albicans and T.reesei. Causes thickening of F.oxysporum hyphae and an increase in their branching. Lacks antibacterial activity against the Gram-negative bacteria E.coli and E.carotovora. The chain is Defensin-1 from Pinus sylvestris (Scotch pine).